The following is a 2226-amino-acid chain: Rotatin (2226 aa).

A disordered region spans residues 295–346 (EARGPYHSPNPSPGSSSSRPSVVGRTGQRPRGDGQDWDAVSSSGSSSHTHVN). Low complexity predominate over residues 307-319 (PGSSSSRPSVVGR). Residue serine 311 is modified to Phosphoserine. Lysine 813 is subject to N6-acetyllysine.

Belongs to the rotatin family. In terms of assembly, interacts with PPP1R35; this interaction allows the mutual recruitment to the centriole.

It localises to the cytoplasm. The protein resides in the cytoskeleton. Its subcellular location is the cilium basal body. Functionally, involved in the genetic cascade that governs left-right specification. Required for correct asymmetric expression of NODAL, LEFTY and PITX2. The chain is Rotatin from Mus musculus (Mouse).